A 174-amino-acid polypeptide reads, in one-letter code: UPF0398 protein LACR_0544 (174 aa).

Belongs to the UPF0398 family.

The sequence is that of UPF0398 protein LACR_0544 from Lactococcus lactis subsp. cremoris (strain SK11).